Here is a 135-residue protein sequence, read N- to C-terminus: Small ribosomal subunit protein uS9 (135 aa).

The segment covering 108–118 (VGDSRRTEPHK) has biased composition (basic and acidic residues). The segment at 108–135 (VGDSRRTEPHKPNRSTKGPRAKRQKSYR) is disordered. A compositionally biased stretch (basic residues) spans 119–135 (PNRSTKGPRAKRQKSYR).

This sequence belongs to the universal ribosomal protein uS9 family. In terms of assembly, part of the 30S ribosomal subunit.

The chain is Small ribosomal subunit protein uS9 from Thermococcus kodakarensis (strain ATCC BAA-918 / JCM 12380 / KOD1) (Pyrococcus kodakaraensis (strain KOD1)).